Consider the following 161-residue polypeptide: Negative cofactor 2 complex subunit beta (161 aa).

The region spanning 11 to 75 (SLPKATVQKM…IAAEHIIKAL (65 aa)) is the Histone-fold domain. The span at 93–107 (EHKEQQKNREKKSSK) shows a compositional bias: basic and acidic residues. Disordered regions lie at residues 93 to 116 (EHKE…VSRD) and 130 to 161 (RERF…TKEN). Residues 135 to 147 (NQNIAHDNHTTTA) show a composition bias toward polar residues.

The protein belongs to the NC2 beta/DR1 family.

The protein resides in the cytoplasm. Its subcellular location is the nucleus. In Schizosaccharomyces pombe (strain 972 / ATCC 24843) (Fission yeast), this protein is Negative cofactor 2 complex subunit beta (ncb2).